The sequence spans 662 residues: Probable conjugal transfer protein TrbE part 2 (662 aa).

Residue 307 to 314 coordinates ATP; that stretch reads GPTGSGKS.

It belongs to the TrbE/VirB4 family.

The polypeptide is Probable conjugal transfer protein TrbE part 2 (trbEB) (Sinorhizobium fredii (strain NBRC 101917 / NGR234)).